A 983-amino-acid polypeptide reads, in one-letter code: Protein translocase subunit SecA (983 aa).

ATP is bound by residues Gln83, 101–105 (GEGKT), and Asp489. The tract at residues 948–983 (ISSEEEDNNEKTNINNNEDLERTKGEAQQTAKNPNE) is disordered. Positions 973–983 (EAQQTAKNPNE) are enriched in polar residues.

The protein belongs to the SecA family. As to quaternary structure, monomer and homodimer. Part of the essential Sec protein translocation apparatus which comprises SecA, SecYEG and auxiliary proteins SecDF. Other proteins may also be involved.

It localises to the cell membrane. The protein resides in the cytoplasm. It carries out the reaction ATP + H2O + cellular proteinSide 1 = ADP + phosphate + cellular proteinSide 2.. Part of the Sec protein translocase complex. Interacts with the SecYEG preprotein conducting channel. Has a central role in coupling the hydrolysis of ATP to the transfer of proteins into and across the cell membrane, serving as an ATP-driven molecular motor driving the stepwise translocation of polypeptide chains across the membrane. This is Protein translocase subunit SecA from Mesomycoplasma hyopneumoniae (strain J / ATCC 25934 / NCTC 10110) (Mycoplasma hyopneumoniae).